The primary structure comprises 503 residues: Maturase K (503 aa).

Belongs to the intron maturase 2 family. MatK subfamily.

It is found in the plastid. The protein localises to the chloroplast. Functionally, usually encoded in the trnK tRNA gene intron. Probably assists in splicing its own and other chloroplast group II introns. The chain is Maturase K from Silene latifolia (White campion).